The sequence spans 488 residues: Serine/threonine-protein kinase 32C (488 aa).

The segment at 1-56 (MRSGAERRGSSAAAPPSSPPPGRARPAGSDVSPALPPPAASQPRARDAGDARAQPR) is disordered. Phosphoserine occurs at positions 10, 17, and 18. Over residues 24–33 (ARPAGSDVSP) the composition is skewed to low complexity. A Protein kinase domain is found at 94–354 (FQILRAIGKG…LQDMQTAPSL (261 aa)). ATP is bound by residues 100-108 (IGKGSFGKV) and K123. D217 serves as the catalytic Proton acceptor. Over residues 397–406 (HKKKKRLAKN) the composition is skewed to basic residues. 2 disordered regions span residues 397–420 (HKKK…QSEN) and 443–488 (KRSQ…SGSS).

This sequence belongs to the protein kinase superfamily. Ser/Thr protein kinase family. Mg(2+) serves as cofactor.

It catalyses the reaction L-seryl-[protein] + ATP = O-phospho-L-seryl-[protein] + ADP + H(+). The catalysed reaction is L-threonyl-[protein] + ATP = O-phospho-L-threonyl-[protein] + ADP + H(+). This Mus musculus (Mouse) protein is Serine/threonine-protein kinase 32C.